The primary structure comprises 351 residues: UPF0421 protein BC_2748 (351 aa).

4 consecutive transmembrane segments (helical) span residues 19 to 39, 74 to 94, 109 to 129, and 131 to 151; these read IAVFLTVLVCDFFNIPTIFAV, FTFFLGHQAISYALAAMFTIV, TLTAVAMIPITANHYFTAFLI, and LATTSTGIIVSTLVNFFIFPP.

Belongs to the UPF0421 family.

The protein resides in the cell membrane. This is UPF0421 protein BC_2748 from Bacillus cereus (strain ATCC 14579 / DSM 31 / CCUG 7414 / JCM 2152 / NBRC 15305 / NCIMB 9373 / NCTC 2599 / NRRL B-3711).